Here is a 250-residue protein sequence, read N- to C-terminus: Iron-sulfur assembly protein 1 (250 aa).

Residues Ala54–Trp89 are disordered. Residues Ser75–Trp89 show a composition bias toward low complexity. Fe cation is bound by residues Cys178, Cys242, and Cys244.

It belongs to the HesB/IscA family.

The protein resides in the mitochondrion matrix. Its function is as follows. Involved in the assembly of mitochondrial and cytoplasmic iron-sulfur proteins. Probably involved in the binding of an intermediate of Fe/S cluster assembly. The chain is Iron-sulfur assembly protein 1 (ISA1) from Saccharomyces cerevisiae (strain ATCC 204508 / S288c) (Baker's yeast).